The sequence spans 355 residues: MSIANLARRVVRALTPYQSARRIGGKGHVWLNANEAPQAYPFTIEGNRLNRYPECQPAEVVNGYAAYAGVNPDQVLVSRGADEAIELLIRTFCEAGEDQILICPPTYGMYAISAETCGVGIVEQPLTACRQPDWPAIADRLSDVKLVFLCSPNNPTGDLVGRDGLIALLEKARNRAIIVVDEAYIEFCPKASVVDLLARFPNLVVTRTLSKAFALAGIRCGFTLASTEVIAMLAKVIAPYPIPDPIAQIAAQALSPMGLELMQERVAELNKQKALIKTALTALPCVREVFEDKGNFILVRFVDSAAVFAAMKAAGIILRDFSTKPGLENSIRITIGYQNKMDAVLAVLRDQPVSL.

An N6-(pyridoxal phosphate)lysine modification is found at Lys211.

This sequence belongs to the class-II pyridoxal-phosphate-dependent aminotransferase family. Histidinol-phosphate aminotransferase subfamily. In terms of assembly, homodimer. Requires pyridoxal 5'-phosphate as cofactor.

The catalysed reaction is L-histidinol phosphate + 2-oxoglutarate = 3-(imidazol-4-yl)-2-oxopropyl phosphate + L-glutamate. It functions in the pathway amino-acid biosynthesis; L-histidine biosynthesis; L-histidine from 5-phospho-alpha-D-ribose 1-diphosphate: step 7/9. This is Histidinol-phosphate aminotransferase from Aeromonas salmonicida (strain A449).